A 364-amino-acid polypeptide reads, in one-letter code: Probable dual-specificity RNA methyltransferase RlmN (364 aa).

Glu107 acts as the Proton acceptor in catalysis. The Radical SAM core domain occupies 113 to 346 (HDYGNSVCVT…ATIRREQGSD (234 aa)). Cysteines 120 and 351 form a disulfide. The [4Fe-4S] cluster site is built by Cys127, Cys131, and Cys134. Residues 177 to 178 (GE), Ser209, 232 to 234 (SLH), and Asn308 each bind S-adenosyl-L-methionine. Residue Cys351 is the S-methylcysteine intermediate of the active site.

It belongs to the radical SAM superfamily. RlmN family. [4Fe-4S] cluster serves as cofactor.

Its subcellular location is the cytoplasm. The catalysed reaction is adenosine(2503) in 23S rRNA + 2 reduced [2Fe-2S]-[ferredoxin] + 2 S-adenosyl-L-methionine = 2-methyladenosine(2503) in 23S rRNA + 5'-deoxyadenosine + L-methionine + 2 oxidized [2Fe-2S]-[ferredoxin] + S-adenosyl-L-homocysteine. The enzyme catalyses adenosine(37) in tRNA + 2 reduced [2Fe-2S]-[ferredoxin] + 2 S-adenosyl-L-methionine = 2-methyladenosine(37) in tRNA + 5'-deoxyadenosine + L-methionine + 2 oxidized [2Fe-2S]-[ferredoxin] + S-adenosyl-L-homocysteine. Functionally, specifically methylates position 2 of adenine 2503 in 23S rRNA and position 2 of adenine 37 in tRNAs. Confers resistance to some classes of antibiotics. The sequence is that of Probable dual-specificity RNA methyltransferase RlmN from Staphylococcus aureus (strain bovine RF122 / ET3-1).